A 242-amino-acid polypeptide reads, in one-letter code: NADPH-dependent pterin aldehyde reductase (242 aa).

N-acetylthreonine is present on T2. 21–50 (LITGVSKGLGRALALELAKRGHTVIGCARS) lines the NADP(+) pocket. Residue S153 coordinates substrate. Y166 functions as the Proton acceptor in the catalytic mechanism. K170 provides a ligand contact to NADP(+).

Belongs to the short-chain dehydrogenases/reductases (SDR) family. Homodimer. As to expression, mostly expressed in seeds, and, to a lower extent, in roots, leaves, flowers and siliques.

Its subcellular location is the cytoplasm. NADPH-dependent pterin aldehyde reductase involved in pterin aldehyde salvage during folate turnover. Catalyzes the reduction of diverse aromatic and aliphatic aldehydes (e.g. acetaldehyde, n-propanal, 1-naphthaldehyde, benzaldehyde, cinnamaldehyde, n-butanal, n-hexanal, n-pentanal, 2-naphthaldehyde, n-octanal, n-nonanal and n-heptanal), in addition to the conversion of pterin-6-aldehyde (PtCHO) to 6-hydroxymethylpterin (PtCH(2)OH), and the conversion of dihydropterin-6-aldehyde (H(2)PtCHO) to 6-hydroxymethyldihydropterin (H(2)PtCH(2)OH). Cannot reduce the pterin ring. This is NADPH-dependent pterin aldehyde reductase from Arabidopsis thaliana (Mouse-ear cress).